Consider the following 78-residue polypeptide: Small ribosomal subunit protein bS18A (78 aa).

It belongs to the bacterial ribosomal protein bS18 family. Part of the 30S ribosomal subunit. Forms a tight heterodimer with protein bS6.

Its function is as follows. Binds as a heterodimer with protein bS6 to the central domain of the 16S rRNA, where it helps stabilize the platform of the 30S subunit. The chain is Small ribosomal subunit protein bS18A from Streptomyces avermitilis (strain ATCC 31267 / DSM 46492 / JCM 5070 / NBRC 14893 / NCIMB 12804 / NRRL 8165 / MA-4680).